Reading from the N-terminus, the 696-residue chain is Polyribonucleotide nucleotidyltransferase (696 aa).

Mg(2+)-binding residues include D486 and D492. Residues P553–V612 form the KH domain. An S1 motif domain is found at G622–K690.

This sequence belongs to the polyribonucleotide nucleotidyltransferase family. The cofactor is Mg(2+).

Its subcellular location is the cytoplasm. It catalyses the reaction RNA(n+1) + phosphate = RNA(n) + a ribonucleoside 5'-diphosphate. Its function is as follows. Involved in mRNA degradation. Catalyzes the phosphorolysis of single-stranded polyribonucleotides processively in the 3'- to 5'-direction. This chain is Polyribonucleotide nucleotidyltransferase, found in Leptospira borgpetersenii serovar Hardjo-bovis (strain L550).